A 554-amino-acid chain; its full sequence is Potassium-transporting ATPase potassium-binding subunit (554 aa).

Transmembrane regions (helical) follow at residues 3–23 (PVLAGVLQLLALTAALALAHV), 60–80 (PAYLRGVLAFSLAGVLFLYLL), 131–151 (GLAVQNFVSAAVGIAVAVALV), 174–194 (VRVLVPIAAVGAVILVACGVI), 252–272 (LFEIFLILLIPVALTRTFGIM), 279–299 (GYAILGTMAAIWAGFVALMMW), 323–343 (FGIGGSSLFAVTTTLTSTGAV), 352–372 (GLGGGITMLGMMLGEIAPGGV), 375–395 (GLYGMLVMAVVAVFIAGLMVG), 412–432 (FAACYILITPALVLVFTAAAM), 481–501 (LGLAMLLGRFVPMVFVLALAG), and 522–542 (LFAGLLAGAVLIITGLTYFPA).

It belongs to the KdpA family. The system is composed of three essential subunits: KdpA, KdpB and KdpC.

The protein resides in the cell membrane. Part of the high-affinity ATP-driven potassium transport (or Kdp) system, which catalyzes the hydrolysis of ATP coupled with the electrogenic transport of potassium into the cytoplasm. This subunit binds the extracellular potassium ions and delivers the ions to the membrane domain of KdpB through an intramembrane tunnel. The sequence is that of Potassium-transporting ATPase potassium-binding subunit from Streptomyces coelicolor (strain ATCC BAA-471 / A3(2) / M145).